Reading from the N-terminus, the 407-residue chain is Imidazolonepropionase (407 aa).

Positions 68 and 70 each coordinate Fe(3+). Residues His-68 and His-70 each coordinate Zn(2+). Arg-77, Tyr-140, and His-173 together coordinate 4-imidazolone-5-propanoate. Tyr-140 contacts N-formimidoyl-L-glutamate. His-238 provides a ligand contact to Fe(3+). Residue His-238 coordinates Zn(2+). Gln-241 contacts 4-imidazolone-5-propanoate. Asp-313 is a binding site for Fe(3+). Position 313 (Asp-313) interacts with Zn(2+). Asn-315 and Gly-317 together coordinate N-formimidoyl-L-glutamate. 4-imidazolone-5-propanoate is bound at residue Thr-318.

This sequence belongs to the metallo-dependent hydrolases superfamily. HutI family. Zn(2+) serves as cofactor. Fe(3+) is required as a cofactor.

The protein localises to the cytoplasm. The enzyme catalyses 4-imidazolone-5-propanoate + H2O = N-formimidoyl-L-glutamate. The protein operates within amino-acid degradation; L-histidine degradation into L-glutamate; N-formimidoyl-L-glutamate from L-histidine: step 3/3. Functionally, catalyzes the hydrolytic cleavage of the carbon-nitrogen bond in imidazolone-5-propanoate to yield N-formimidoyl-L-glutamate. It is the third step in the universal histidine degradation pathway. This Burkholderia lata (strain ATCC 17760 / DSM 23089 / LMG 22485 / NCIMB 9086 / R18194 / 383) protein is Imidazolonepropionase.